A 124-amino-acid chain; its full sequence is Glutaredoxin-2 (124 aa).

Cys-13 and Cys-16 are joined by a disulfide.

This sequence belongs to the glutaredoxin family. In terms of assembly, homodimer.

Its subcellular location is the host cytoplasm. Functionally, glutaredoxin necessary for virion morphogenesis and virus replication. Functions as a thiol-disulfide transfer protein between membrane-associated OPG128 and substrates OPG095 or OPG053. The complete pathway for formation of disulfide bonds in intracellular virion membrane proteins sequentially involves oxidation of OPG072, OPG128 and OPG088. Exhibit thioltransferase and dehydroascorbate reductase activities in vitro. This Homo sapiens (Human) protein is Glutaredoxin-2 (OPG088).